A 967-amino-acid chain; its full sequence is Disks large homolog 1 (967 aa).

Residues S5–R65 form the L27 domain. The PDZ 1 domain occupies N202–K289. The disordered stretch occupies residues I324–Q351. The segment covering P330–V339 has biased composition (pro residues). 2 consecutive PDZ domains span residues V361–T448 and P510–P591. The SH3 domain maps to R619–E690. Residues E673 to S723 are disordered. Over residues S682–Q696 the composition is skewed to basic residues. Polar residues predominate over residues V697 to L715. The Guanylate kinase-like domain maps to V769 to S955.

It belongs to the MAGUK family. In terms of assembly, homooligomerizes; requires L27 domain. Interacts (via L27 domain) with ajm-1; the interaction regulates ajm-1 apical junction location. As to expression, expressed in the apical junctions in the hypodermis. Expressed in epithelial cells in the reproductive system including vulva, uterus and spermatheca.

It is found in the membrane. The protein resides in the apical cell membrane. Its subcellular location is the cell junction. It localises to the adherens junction. The protein localises to the lateral cell membrane. It is found in the cytoplasm. Its function is as follows. Essential multidomain scaffolding protein required for normal development. Recruits channels, receptors and signaling molecules to discrete plasma membrane domains in polarized cells. Required for proper embryonic elongation. Acts upstream of ajm-1 and becomes localized to apical junctions independently of ajm-1. With let-413, cooperatively regulates ajm-1 localization to apical junctions and the establishment of newly formed epithelia. Plays a role in assembling the adherens junction by clustering ajm-1 and other proteins, to form electron-dense structures; may form a compartment distinct to that of hmp-1 and associated proteins. Plays a role in the directed outgrowth of seam cells, towards neighboring seam cells, during larval development. This Caenorhabditis elegans protein is Disks large homolog 1.